We begin with the raw amino-acid sequence, 427 residues long: Synaptotagmin-A (427 aa).

Residues 1-57 lie on the Vesicular side of the membrane; the sequence is MKLTEAYHDALAALPATPPLPTAVANATEAAAGSEEGKQDGFSKVKVKEKFMNELNK. N26 carries an N-linked (GlcNAc...) asparagine glycan. A helical membrane pass occupies residues 58–84; that stretch reads IPLPPWALVAIAIVAIILGLTCCFCIC. The Cytoplasmic segment spans residues 85–427; sequence KKCLLKKKNK…EVDATLGMKK (343 aa). The tract at residues 96–145 is disordered; that stretch reads KGKEKGGKNAMTMKDVKEMGKSGKEQALKDEDEDAETGLTTDGKEEEKED. The span at 109-124 shows a compositional bias: basic and acidic residues; the sequence is KDVKEMGKSGKEQALK. The phospholipid binding stretch occupies residues 141–387; that stretch reads EEKEDEKLGK…AIGKVFVGYN (247 aa). C2 domains follow at residues 147 to 266 and 278 to 411; these read KLGK…EEWR and KLGD…AQWH. The Ca(2+) site is built by L177, D178, D184, D236, F237, D238, S241, K242, D244, D309, D315, D369, D371, and D377.

It belongs to the synaptotagmin family. In terms of assembly, homodimer or homotrimer (possible). The cofactor is Ca(2+). Forebrain, cerebellum and neuroendocrine cells.

The protein localises to the cytoplasmic vesicle. The protein resides in the secretory vesicle. It localises to the synaptic vesicle membrane. It is found in the synapse. Functionally, may have a regulatory role in the membrane interactions during trafficking of synaptic vesicles at the active zone of the synapse. It binds acidic phospholipids with a specificity that requires the presence of both an acidic head group and a diacyl backbone. The sequence is that of Synaptotagmin-A (P65-A) from Diplobatis ommata (Ocellated electric ray).